A 375-amino-acid chain; its full sequence is DNA replication and repair protein RecF (375 aa).

30–37 (GENAQGKT) contributes to the ATP binding site.

Belongs to the RecF family.

It localises to the cytoplasm. In terms of biological role, the RecF protein is involved in DNA metabolism; it is required for DNA replication and normal SOS inducibility. RecF binds preferentially to single-stranded, linear DNA. It also seems to bind ATP. In Bacillus mycoides (strain KBAB4) (Bacillus weihenstephanensis), this protein is DNA replication and repair protein RecF.